The primary structure comprises 452 residues: L-seryl-tRNA(Sec) selenium transferase (452 aa).

Position 285 is an N6-(pyridoxal phosphate)lysine (lysine 285).

The protein belongs to the SelA family. It depends on pyridoxal 5'-phosphate as a cofactor.

It is found in the cytoplasm. It catalyses the reaction L-seryl-tRNA(Sec) + selenophosphate + H(+) = L-selenocysteinyl-tRNA(Sec) + phosphate. It functions in the pathway aminoacyl-tRNA biosynthesis; selenocysteinyl-tRNA(Sec) biosynthesis; selenocysteinyl-tRNA(Sec) from L-seryl-tRNA(Sec) (bacterial route): step 1/1. Converts seryl-tRNA(Sec) to selenocysteinyl-tRNA(Sec) required for selenoprotein biosynthesis. The chain is L-seryl-tRNA(Sec) selenium transferase from Aquifex aeolicus (strain VF5).